Reading from the N-terminus, the 398-residue chain is Sphingosine 1-phosphate receptor 5 (398 aa).

The Extracellular portion of the chain corresponds to 1–40 (MEPGLLRPAPVSEVIVLHYNYTGKLRGARYQPGAGLRADA). Residue N20 is glycosylated (N-linked (GlcNAc...) asparagine). A helical transmembrane segment spans residues 41–61 (VVCLAVCALIVLENLAVLVVL). The Cytoplasmic segment spans residues 62–70 (GRHPRFHAP). Residues 71 to 91 (MFLLLGSLTLSDLLAGAAYAA) form a helical membrane-spanning segment. Topologically, residues 92 to 111 (NILLSGPLTLRLSPALWFAR) are extracellular. A helical transmembrane segment spans residues 112-132 (EGGVFVALAASVLSLLAIALE). Residues 133-151 (RLLTMERRGPAPAARRGRT) are Cytoplasmic-facing. The chain crosses the membrane as a helical span at residues 152–172 (LALAAGAWGVSLLLGLLPALG). Over 173–191 (WNCLGRLEACSTVLPLYAK) the chain is Extracellular. The helical transmembrane segment at 192-212 (AYVLFCVLAFVGILAAICGLY) threads the bilayer. The Cytoplasmic portion of the chain corresponds to 213–252 (ARIYCQVRAKAQRLRARPGAGEGTSARARGTPRSLALLRT). The helical transmembrane segment at 253 to 273 (LSVVLVAFVACWGPLFLLLLL) threads the bilayer. At 274–287 (DVACPARACPVLLQ) the chain is on the extracellular side. Residues 288–308 (ADPFLGLAMANSLLNPIIYTF) form a helical membrane-spanning segment. Residues 309–398 (TNRDLRHALL…QTLVPPPAAD (90 aa)) lie on the Cytoplasmic side of the membrane. The S-palmitoyl cysteine moiety is linked to residue C323. The disordered stretch occupies residues 332 to 398 (SGTSRSPGST…QTLVPPPAAD (67 aa)). The span at 334-343 (TSRSPGSTLG) shows a compositional bias: low complexity. S337 carries the phosphoserine modification. Positions 359 to 373 (SSSRSERSSPQRDGL) are enriched in basic and acidic residues. Position 381 is a phosphoserine (S381).

Belongs to the G-protein coupled receptor 1 family.

Its subcellular location is the cell membrane. Its function is as follows. Receptor for the lysosphingolipid sphingosine 1-phosphate (S1P). S1P is a bioactive lysophospholipid that elicits diverse physiological effect on most types of cells and tissues. Is coupled to both the G(i/O)alpha and G(12) subclass of heteromeric G-proteins. The polypeptide is Sphingosine 1-phosphate receptor 5 (S1PR5) (Sus scrofa (Pig)).